The chain runs to 156 residues: Small ribosomal subunit protein uS7 (156 aa).

This sequence belongs to the universal ribosomal protein uS7 family. In terms of assembly, part of the 30S ribosomal subunit. Contacts proteins S9 and S11.

Functionally, one of the primary rRNA binding proteins, it binds directly to 16S rRNA where it nucleates assembly of the head domain of the 30S subunit. Is located at the subunit interface close to the decoding center, probably blocks exit of the E-site tRNA. The sequence is that of Small ribosomal subunit protein uS7 from Finegoldia magna (strain ATCC 29328 / DSM 20472 / WAL 2508) (Peptostreptococcus magnus).